We begin with the raw amino-acid sequence, 499 residues long: GTPase Der (499 aa).

2 EngA-type G domains span residues 3–166 (PVVA…LETL) and 213–386 (IKFA…QSAT). GTP contacts are provided by residues 9-16 (GRPNVGKS), 56-60 (DTGGI), 118-121 (NKTD), 219-226 (GRPNVGKS), 266-270 (DTAGV), and 331-334 (NKWD). A KH-like domain is found at 387–471 (RRTSTAMLTR…PIRVEFQESA (85 aa)). The segment at 476–499 (GRKNTMTLSQERQRKRLLKAKTKK) is disordered. Positions 488–499 (QRKRLLKAKTKK) are enriched in basic residues.

Belongs to the TRAFAC class TrmE-Era-EngA-EngB-Septin-like GTPase superfamily. EngA (Der) GTPase family. Associates with the 50S ribosomal subunit.

In terms of biological role, GTPase that plays an essential role in the late steps of ribosome biogenesis. The protein is GTPase Der of Aeromonas salmonicida (strain A449).